A 144-amino-acid chain; its full sequence is Ribonuclease VapC1 (144 aa).

Positions 6-132 (VFVDGNVIVD…SFYSPDIEVL (127 aa)) constitute a PINc domain. Mg(2+) is bound by residues D9 and D102.

It belongs to the PINc/VapC protein family. Mg(2+) serves as cofactor.

Functionally, toxic component of a type II toxin-antitoxin (TA) system. An RNase. The protein is Ribonuclease VapC1 of Aquifex aeolicus (strain VF5).